Here is a 411-residue protein sequence, read N- to C-terminus: Arginine deiminase (411 aa).

The active-site Amidino-cysteine intermediate is the Cys-401.

The protein belongs to the arginine deiminase family.

The protein resides in the cytoplasm. It carries out the reaction L-arginine + H2O = L-citrulline + NH4(+). Its pathway is amino-acid degradation; L-arginine degradation via ADI pathway; carbamoyl phosphate from L-arginine: step 1/2. This is Arginine deiminase from Staphylococcus aureus (strain MRSA252).